A 520-amino-acid chain; its full sequence is O-methyltransferase cicE (520 aa).

S-adenosyl-L-methionine contacts are provided by residues 300 to 301 (GG), Asp323, 355 to 356 (NF), and Arg371.

The protein belongs to the class I-like SAM-binding methyltransferase superfamily. Cation-independent O-methyltransferase family.

The protein operates within phytotoxin biosynthesis. Functionally, O-methyltransferase; part of the gene cluster that mediates the biosynthesis of cichorine, a phytotoxin active against knapweed, corn, and soybeans. The first step in the pathway is performed by the non-reducing polyketide synthase pkbA that condenses one acetyl-CoA starter unit with 3 malonyl-CoA units. PkbA also catalyzes one methylation step to produce 3-methylorsellinate. The nonribosomal peptide synthase-like protein cicB, the cytochrome P450 monooxygenase cicH and the O-methyltransferase cicE are involved in the conversion of 3-methylorsellinate into nidulol. CicB converts 3-methylorsellinate to a yet unidentified intermediate, cicH may play a ring-closing role for cichorine and cicE is plausibly responsible for the methylation of one of the phenol groups. The oxidoreductase cicC acts downstream with still unidentified enzymes to further convert nidulol into cichorine. This is O-methyltransferase cicE from Emericella nidulans (strain FGSC A4 / ATCC 38163 / CBS 112.46 / NRRL 194 / M139) (Aspergillus nidulans).